Reading from the N-terminus, the 207-residue chain is Adenylyl-sulfate kinase (207 aa).

34–41 (GLSGSGKS) serves as a coordination point for ATP. The Phosphoserine intermediate role is filled by S108.

This sequence belongs to the APS kinase family.

It carries out the reaction adenosine 5'-phosphosulfate + ATP = 3'-phosphoadenylyl sulfate + ADP + H(+). It participates in sulfur metabolism; hydrogen sulfide biosynthesis; sulfite from sulfate: step 2/3. In terms of biological role, catalyzes the synthesis of activated sulfate. The polypeptide is Adenylyl-sulfate kinase (Lactiplantibacillus plantarum (strain ATCC BAA-793 / NCIMB 8826 / WCFS1) (Lactobacillus plantarum)).